We begin with the raw amino-acid sequence, 264 residues long: Apolipoprotein A-I (264 aa).

The first 18 residues, 1-18, serve as a signal peptide directing secretion; sequence MKAVVLAVAVLFLTGSQA. Tandem repeats lie at residues 67–88 and 89–110. Residues 67 to 264 are 10 X approximate tandem repeats; the sequence is LKLVDNWDTV…DETSKRLSTQ (198 aa). The residue at position 109 (methionine 109) is a Methionine sulfoxide. Residues 111-121 form a 3; half-length repeat; the sequence is KDLEEVKKQVQ. Repeat copies occupy residues 122 to 143, 144 to 165, and 166 to 187. One copy of the 7; truncated repeat lies at 188–207; sequence PYSDKMRERLAQHLAKLKDS. Position 193 is a methionine sulfoxide (methionine 193). Repeat unit 8 spans residues 208–229; that stretch reads TTLAEYRTKASNHLQTLSEKAK. One copy of the 9; half-length repeat lies at 230–240; the sequence is PALEDLRQGLT. Copy 10 of the repeat occupies 241-264; that stretch reads PMLESFRATIMGWIDETSKRLSTQ. The residue at position 242 (methionine 242) is a Methionine sulfoxide.

The protein belongs to the apolipoprotein A1/A4/E family. In terms of assembly, homodimer. Interacts with APOA1BP and CLU. Component of a sperm activating protein complex (SPAP), consisting of APOA1, an immunoglobulin heavy chain, an immunoglobulin light chain and albumin. Interacts with NDRG1. Interacts with SCGB3A2. Interacts with NAXE and YJEFN3. In terms of processing, glycosylated. Palmitoylated. Post-translationally, phosphorylation sites are present in the extracellular medium.

It is found in the secreted. Its function is as follows. Participates in the reverse transport of cholesterol from tissues to the liver for excretion by promoting cholesterol efflux from tissues and by acting as a cofactor for the lecithin cholesterol acyltransferase (LCAT). As part of the SPAP complex, activates spermatozoa motility. This is Apolipoprotein A-I (Apoa1) from Peromyscus maniculatus bairdii (Prairie deer mouse).